The sequence spans 495 residues: Nuclear receptor subfamily 6 group A member 1 (495 aa).

The interval 1-34 (MERDERPPSGGGGGGGSAGFLEPPAALPPPPRNG) is disordered. A compositionally biased stretch (gly residues) spans 9–18 (SGGGGGGGSA). The nuclear receptor DNA-binding region spans 72 to 147 (QRTCLICGDR…MGMNRKAIRE (76 aa)). Zn(2+)-binding residues include Cys-75, Cys-78, Cys-92, Cys-95, Cys-111, Cys-117, Cys-127, and Cys-130. NR C4-type zinc fingers lie at residues 75–95 (CLIC…CEGC) and 111–135 (CSRD…LLKC). Disordered regions lie at residues 145-165 (IRED…QISE) and 177-214 (FEEE…LSSS). Basic and acidic residues predominate over residues 180–192 (EANHWSNHGDSDH). The segment at 187–268 (HGDSDHSSPG…RSLDPQSYSL (82 aa)) is sufficient for interaction with UIMC1. The segment covering 202-214 (SNQPSPGSTLSSS) has biased composition (low complexity). Residues 264–495 (QSYSLIHQLM…HSCKTSTVKE (232 aa)) form the NR LBD domain.

This sequence belongs to the nuclear hormone receptor family. NR6 subfamily. As to quaternary structure, homodimer. Interacts with UIMC1. Expressed in the germ cells of both the adult testis and ovary, being most abundant in spermatids.

It localises to the nucleus. Its function is as follows. Orphan nuclear receptor that binds to a response element containing the sequence 5'-TCAAGGTCA-3'. Acts as a regulator of embryonic stem cell pluripotency by mediating repression of POU5F1/OCT4: binds to the DR0 element within the POU5F1/OCT4 promoter and inhibits POU5F1/OCT4 expression during embryonic stem cell differentiation. Required to restrict POU5F1/OCT4 expression to the germ cell lineage. Involved in the regulation of gene expression in germ cell development during gametogenesis. In Mus musculus (Mouse), this protein is Nuclear receptor subfamily 6 group A member 1 (Nr6a1).